Reading from the N-terminus, the 433-residue chain is N-lysine methyltransferase SMYD2 (433 aa).

Positions 7–241 (GGLERFCSAG…PGDEVFTSYI (235 aa)) constitute an SET domain. Residue 17–19 (KGR) participates in S-adenosyl-L-methionine binding. Cys52, Cys55, Cys65, Cys68, Cys74, Cys78, His86, and Cys90 together coordinate Zn(2+). Residues 52 to 90 (CECCFARKEGLSKCGRCKQAFYCDVECQKEDWPLHKLEC) form an MYND-type zinc finger. S-adenosyl-L-methionine-binding positions include His137, 206-207 (NH), and 258-260 (YFF). At Ser283 the chain carries Phosphoserine.

This sequence belongs to the class V-like SAM-binding methyltransferase superfamily. In terms of assembly, interacts with RNA polymerase II and HELZ. Interacts with SIN3A and HDAC1. Interacts (via MYND-type zinc finger) with EPB41L3. Interacts (via SET domain) with p53/TP53. Interacts with RB1 and HSP90AA1.

Its subcellular location is the cytoplasm. It localises to the cytosol. It is found in the nucleus. It catalyses the reaction L-lysyl(4)-[histone H3] + 3 S-adenosyl-L-methionine = N(6),N(6),N(6)-trimethyl-L-lysyl(4)-[histone H3] + 3 S-adenosyl-L-homocysteine + 3 H(+). The enzyme catalyses L-lysyl-[protein] + S-adenosyl-L-methionine = N(6)-methyl-L-lysyl-[protein] + S-adenosyl-L-homocysteine + H(+). In terms of biological role, protein-lysine N-methyltransferase that methylates both histones and non-histone proteins, including p53/TP53 and RB1. Specifically trimethylates histone H3 'Lys-4' (H3K4me3) in vivo. The activity requires interaction with HSP90alpha. Shows even higher methyltransferase activity on p53/TP53. Monomethylates 'Lys-370' of p53/TP53, leading to decreased DNA-binding activity and subsequent transcriptional regulation activity of p53/TP53. Monomethylates RB1 at 'Lys-860'. This Rattus norvegicus (Rat) protein is N-lysine methyltransferase SMYD2 (Smyd2).